A 127-amino-acid polypeptide reads, in one-letter code: Glycine cleavage system H protein (127 aa).

The 83-residue stretch at 22–104 folds into the Lipoyl-binding domain; the sequence is EVVIGITHFA…YEGAWMVKVE (83 aa). Lys63 is subject to N6-lipoyllysine.

It belongs to the GcvH family. In terms of assembly, the glycine cleavage system is composed of four proteins: P, T, L and H. (R)-lipoate serves as cofactor.

In terms of biological role, the glycine cleavage system catalyzes the degradation of glycine. The H protein shuttles the methylamine group of glycine from the P protein to the T protein. Its function is as follows. Is also involved in protein lipoylation via its role as an octanoyl/lipoyl carrier protein intermediate. The polypeptide is Glycine cleavage system H protein (Bacillus cereus (strain ZK / E33L)).